Consider the following 253-residue polypeptide: Phosphate import ATP-binding protein PstB (253 aa).

In terms of domain architecture, ABC transporter spans 7 to 248; the sequence is IDARDVNFWY…PEKEATQNYI (242 aa). ATP is bound at residue 39-46; it reads GPSGCGKS.

The protein belongs to the ABC transporter superfamily. Phosphate importer (TC 3.A.1.7) family. The complex is composed of two ATP-binding proteins (PstB), two transmembrane proteins (PstC and PstA) and a solute-binding protein (PstS).

The protein resides in the cell inner membrane. The enzyme catalyses phosphate(out) + ATP + H2O = ADP + 2 phosphate(in) + H(+). In terms of biological role, part of the ABC transporter complex PstSACB involved in phosphate import. Responsible for energy coupling to the transport system. The protein is Phosphate import ATP-binding protein PstB of Bacteroides fragilis (strain ATCC 25285 / DSM 2151 / CCUG 4856 / JCM 11019 / LMG 10263 / NCTC 9343 / Onslow / VPI 2553 / EN-2).